We begin with the raw amino-acid sequence, 291 residues long: Light-independent protochlorophyllide reductase iron-sulfur ATP-binding protein (291 aa).

Residues 10–15 and Lys-39 contribute to the ATP site; that span reads GIGKST. Ser-14 provides a ligand contact to Mg(2+). [4Fe-4S] cluster is bound by residues Cys-95 and Cys-129. Residue 180-181 coordinates ATP; it reads NR.

The protein belongs to the NifH/BchL/ChlL family. In terms of assembly, homodimer. Protochlorophyllide reductase is composed of three subunits; ChlL, ChlN and ChlB. Requires [4Fe-4S] cluster as cofactor.

It is found in the plastid. The protein localises to the chloroplast. The catalysed reaction is chlorophyllide a + oxidized 2[4Fe-4S]-[ferredoxin] + 2 ADP + 2 phosphate = protochlorophyllide a + reduced 2[4Fe-4S]-[ferredoxin] + 2 ATP + 2 H2O. Its pathway is porphyrin-containing compound metabolism; chlorophyll biosynthesis (light-independent). In terms of biological role, component of the dark-operative protochlorophyllide reductase (DPOR) that uses Mg-ATP and reduced ferredoxin to reduce ring D of protochlorophyllide (Pchlide) to form chlorophyllide a (Chlide). This reaction is light-independent. The L component serves as a unique electron donor to the NB-component of the complex, and binds Mg-ATP. The sequence is that of Light-independent protochlorophyllide reductase iron-sulfur ATP-binding protein from Pinus koraiensis (Korean pine).